Consider the following 40-residue polypeptide: Photosystem II reaction center protein J (40 aa).

Residues 8-28 (IPLWVIGTVAGILVIGLIGIF) form a helical membrane-spanning segment.

Belongs to the PsbJ family. PSII is composed of 1 copy each of membrane proteins PsbA, PsbB, PsbC, PsbD, PsbE, PsbF, PsbH, PsbI, PsbJ, PsbK, PsbL, PsbM, PsbT, PsbX, PsbY, PsbZ, Psb30/Ycf12, at least 3 peripheral proteins of the oxygen-evolving complex and a large number of cofactors. It forms dimeric complexes.

The protein localises to the plastid. It is found in the chloroplast thylakoid membrane. Its function is as follows. One of the components of the core complex of photosystem II (PSII). PSII is a light-driven water:plastoquinone oxidoreductase that uses light energy to abstract electrons from H(2)O, generating O(2) and a proton gradient subsequently used for ATP formation. It consists of a core antenna complex that captures photons, and an electron transfer chain that converts photonic excitation into a charge separation. This Lepidium virginicum (Virginia pepperweed) protein is Photosystem II reaction center protein J.